The sequence spans 186 residues: Large ribosomal subunit protein uL10 (186 aa).

This sequence belongs to the universal ribosomal protein uL10 family. In terms of assembly, part of the ribosomal stalk of the 50S ribosomal subunit. The N-terminus interacts with L11 and the large rRNA to form the base of the stalk. The C-terminus forms an elongated spine to which L12 dimers bind in a sequential fashion forming a multimeric L10(L12)X complex.

Forms part of the ribosomal stalk, playing a central role in the interaction of the ribosome with GTP-bound translation factors. This Rhodococcus jostii (strain RHA1) protein is Large ribosomal subunit protein uL10.